The following is an 811-amino-acid chain: Actin filament-associated protein 1-like 2 (811 aa).

Disordered stretches follow at residues lysine 67–lysine 110 and glutamate 132–glutamine 168. Residues aspartate 181 to glycine 277 form the PH 1 domain. Residues glutamine 294–isoleucine 326 form a disordered region. The segment covering proline 299 to glycine 309 has biased composition (basic and acidic residues). The PH 2 domain occupies alanine 359–glycine 453. Disordered stretches follow at residues arginine 500–glutamate 532 and leucine 558–valine 631. Composition is skewed to basic and acidic residues over residues aspartate 521–glutamate 532, valine 566–arginine 577, and arginine 622–valine 631. A coiled-coil region spans residues leucine 642–glycine 737.

In terms of assembly, interacts with src.

It is found in the cytoplasm. May play a role in a signaling cascade by enhancing the kinase activity of src. Contributes to src-regulated transcription activation. This is Actin filament-associated protein 1-like 2 (afap1l2) from Xenopus laevis (African clawed frog).